The chain runs to 1072 residues: DNA-directed RNA polymerase subunit beta (1072 aa).

Belongs to the RNA polymerase beta chain family. As to quaternary structure, in plastids the minimal PEP RNA polymerase catalytic core is composed of four subunits: alpha, beta, beta', and beta''. When a (nuclear-encoded) sigma factor is associated with the core the holoenzyme is formed, which can initiate transcription.

It is found in the plastid. It localises to the chloroplast. It catalyses the reaction RNA(n) + a ribonucleoside 5'-triphosphate = RNA(n+1) + diphosphate. Its function is as follows. DNA-dependent RNA polymerase catalyzes the transcription of DNA into RNA using the four ribonucleoside triphosphates as substrates. The sequence is that of DNA-directed RNA polymerase subunit beta from Crucihimalaya wallichii (Rock-cress).